A 167-amino-acid chain; its full sequence is Fimbrial adapter PapF (167 aa).

An N-terminal signal peptide occupies residues 1–18 (MIRLSLFISLLLTSVAVL).

The protein resides in the secreted. The protein localises to the fimbrium. In terms of biological role, adapter that links the PapG adhesin to the distal end of the tip fibrillum. PapF is required for the correct presentation of the adhesin at the distal end of the tip fibrillum. Pili are polar filaments radiating from the surface of the bacterium to a length of 0.5-1.5 micrometers and numbering 100-300 per cell, and enable bacteria to colonize the epithelium of specific host organs. The chain is Fimbrial adapter PapF (papF) from Escherichia coli.